The primary structure comprises 1288 residues: (E3-independent) E2 ubiquitin-conjugating enzyme UBE2O (1288 aa).

Low complexity-rich tracts occupy residues Met-1–Ala-26 and Ala-34–Pro-47. 2 disordered regions span residues Met-1–Ser-51 and Glu-80–Ala-109. 4 positions are modified to phosphoserine: Ser-45, Ser-82, Ser-84, and Ser-394. 2 disordered regions span residues Thr-396–Val-529 and Glu-711–Val-743. A compositionally biased stretch (basic and acidic residues) spans Cys-401–Ala-418. The residue at position 436 (Ser-436) is a Phosphoserine. Positions Met-440–Glu-450 are enriched in acidic residues. Over residues Glu-462 to Glu-472 the composition is skewed to basic and acidic residues. Positions Gln-473–Asp-485 are enriched in acidic residues. Phosphothreonine occurs at positions 483 and 486. Residues Thr-486–Gly-502 are compositionally biased toward low complexity. Phosphoserine is present on Ser-510. Positions Asn-517–Lys-528 are enriched in basic residues. The span at Val-717–Ser-726 shows a compositional bias: low complexity. Positions Asp-727 to Glu-737 are enriched in acidic residues. Residues Arg-809 to Val-879 adopt a coiled-coil conformation. A Phosphoserine modification is found at Ser-833. Phosphothreonine is present on Thr-835. Ser-836 is subject to Phosphoserine. Residues Glu-872–Glu-890 are compositionally biased toward basic and acidic residues. A disordered region spans residues Glu-872–Trp-899. At Ser-893 the chain carries Phosphoserine. The UBC core domain maps to Lys-950 to Thr-1110. Residue Cys-1037 is the Glycyl thioester intermediate of the active site. A disordered region spans residues Gly-1158–Tyr-1247.

It belongs to the ubiquitin-conjugating enzyme family. As to quaternary structure, interacts with CPNE1 (via VWFA domain) and CPNE4 (via VWFA domain). Interacts with UBR2. Post-translationally, phosphorylated. Phosphorylation affects subcellular location. In terms of processing, ubiquitinated: autoubiquitinates, possibly affecting its subcellular location. As to expression, highly expressed in reticulocytes.

The protein resides in the cytoplasm. It localises to the nucleus. The enzyme catalyses S-ubiquitinyl-[E1 ubiquitin-activating enzyme]-L-cysteine + [acceptor protein]-L-lysine = [E1 ubiquitin-activating enzyme]-L-cysteine + N(6)-monoubiquitinyl-[acceptor protein]-L-lysine.. It participates in protein modification; protein ubiquitination. With respect to regulation, inhibited by inorganic arsenite such as phenylarsenoxides. Its function is as follows. E2/E3 hybrid ubiquitin-protein ligase that displays both E2 and E3 ligase activities and mediates monoubiquitination of target proteins. Negatively regulates TRAF6-mediated NF-kappa-B activation independently of its E2 activity. Acts as a positive regulator of BMP7 signaling by mediating monoubiquitination of SMAD6, thereby regulating adipogenesis. Mediates monoubiquitination at different sites of the nuclear localization signal (NLS) of BAP1, leading to cytoplasmic retention of BAP1. Also able to monoubiquitinate the NLS of other chromatin-associated proteins, such as INO80 and CXXC1, affecting their subcellular location. Acts as a regulator of retrograde transport by assisting the TRIM27:MAGEL2 E3 ubiquitin ligase complex to mediate 'Lys-63'-linked ubiquitination of WASHC1, leading to promote endosomal F-actin assembly. The sequence is that of (E3-independent) E2 ubiquitin-conjugating enzyme UBE2O (Ube2o) from Mus musculus (Mouse).